A 339-amino-acid chain; its full sequence is Biotin synthase (339 aa).

Residues 55–282 (NAVQLSTLLS…KAVVRLSAGR (228 aa)) form the Radical SAM core domain. [4Fe-4S] cluster contacts are provided by cysteine 70, cysteine 74, and cysteine 77. The [2Fe-2S] cluster site is built by cysteine 114, cysteine 145, cysteine 205, and arginine 277.

It belongs to the radical SAM superfamily. Biotin synthase family. Homodimer. It depends on [4Fe-4S] cluster as a cofactor. The cofactor is [2Fe-2S] cluster.

It carries out the reaction (4R,5S)-dethiobiotin + (sulfur carrier)-SH + 2 reduced [2Fe-2S]-[ferredoxin] + 2 S-adenosyl-L-methionine = (sulfur carrier)-H + biotin + 2 5'-deoxyadenosine + 2 L-methionine + 2 oxidized [2Fe-2S]-[ferredoxin]. Its pathway is cofactor biosynthesis; biotin biosynthesis; biotin from 7,8-diaminononanoate: step 2/2. Its function is as follows. Catalyzes the conversion of dethiobiotin (DTB) to biotin by the insertion of a sulfur atom into dethiobiotin via a radical-based mechanism. This Burkholderia orbicola (strain MC0-3) protein is Biotin synthase.